Consider the following 292-residue polypeptide: Mycothiol acetyltransferase (292 aa).

2 N-acetyltransferase domains span residues 13-168 (ALDR…KWLQ) and 159-292 (KSVA…VYEK). 1D-myo-inositol 2-(L-cysteinylamino)-2-deoxy-alpha-D-glucopyranoside is bound at residue E40. An acetyl-CoA-binding site is contributed by 77-79 (LAV). The 1D-myo-inositol 2-(L-cysteinylamino)-2-deoxy-alpha-D-glucopyranoside site is built by E179, K218, and E226. Residues 230 to 232 (VGL) and 237 to 243 (RGRGLGD) contribute to the acetyl-CoA site. A 1D-myo-inositol 2-(L-cysteinylamino)-2-deoxy-alpha-D-glucopyranoside-binding site is contributed by Y264.

It belongs to the acetyltransferase family. MshD subfamily. As to quaternary structure, monomer.

It carries out the reaction 1D-myo-inositol 2-(L-cysteinylamino)-2-deoxy-alpha-D-glucopyranoside + acetyl-CoA = mycothiol + CoA + H(+). Its function is as follows. Catalyzes the transfer of acetyl from acetyl-CoA to desacetylmycothiol (Cys-GlcN-Ins) to form mycothiol. The chain is Mycothiol acetyltransferase from Corynebacterium glutamicum (strain R).